A 374-amino-acid chain; its full sequence is MAGQAPNMLAPPTDDELLHAQADLWRHSLYFVTSMAFQCAVKLGIPTAIHRAGGTASLPDLVAALSLPPAKLPFLRRLMRLLVHSGVFAAADDTTGSAGTYRLTPLSWLLVEGEGGAPVVDGHPCQVPVVLAGTSRHFVEAAMGLAEWFRKDVPAAAPPSPFEEVHGAVLFDESMASLHPEVDTVFNQALAAYDHSGFATVLRECSEVFQGVQSLTDCRGGDGAAAKAIVEAFPHIKCTVLDFPRVIGNKRGDGVVNYVAGDMFRAIPPAQAVMLKLVLHHWSDEDCVKILTQCKKAIPARKDGGKVIIIDIVIGAPSGPLLEAQLLMDVGMMVATKGRQRDENDWRDLFKKAGFNNYKIVKKLRARAVFEVYP.

4 residues coordinate S-adenosyl-L-homocysteine: aspartate 242, aspartate 262, methionine 263, and lysine 276. Residue histidine 280 is the Proton acceptor of the active site.

Belongs to the class I-like SAM-binding methyltransferase superfamily. Cation-independent O-methyltransferase family. COMT subfamily.

This chain is Flavonoid O-methyltransferase-like protein Os11g0303600, found in Oryza sativa subsp. japonica (Rice).